A 430-amino-acid polypeptide reads, in one-letter code: Hemagglutinin-esterase (430 aa).

The signal sequence occupies residues M1–S27. Positions L16 to V133 are esterase domain first part. Residues K28–Y404 are Virion surface-facing. The active-site Nucleophile is S49. C53 and C69 are oxidised to a cystine. Residues N88, N117, N159, N165, N247, N268, and N289 are each glycosylated (N-linked (GlcNAc...) asparagine; by host). Disulfide bonds link C120–C168, C207–C284, and C215–C257. A receptor binding region spans residues G134 to K274. The segment at F275 to E390 is esterase domain second part. The cysteines at positions 315 and 320 are disulfide-linked. N324 is a glycosylation site (N-linked (GlcNAc...) asparagine; by host). Residues D336 and H339 each act as charge relay system in the active site. N354 carries N-linked (GlcNAc...) asparagine; by host glycosylation. C357 and C382 are oxidised to a cystine. Residues F405–F425 traverse the membrane as a helical segment. The Intravirion segment spans residues C426–Y430.

Belongs to the influenza type C/coronaviruses hemagglutinin-esterase family. Post-translationally, N-glycosylated.

It localises to the virion membrane. Its subcellular location is the host cell membrane. It catalyses the reaction N-acetyl-9-O-acetylneuraminate + H2O = N-acetylneuraminate + acetate + H(+). The catalysed reaction is N-acetyl-4-O-acetylneuraminate + H2O = N-acetylneuraminate + acetate + H(+). Structural protein that makes short spikes at the surface of the virus. Contains receptor binding and receptor-destroying activities. Mediates de-O-acetylation of N-acetyl-9-O-acetylneuraminic acid, which is probably the receptor determinant recognized by the virus on the surface of erythrocytes and susceptible cells. This receptor-destroying activity is important for virus release as it probably helps preventing self-aggregation and ensures the efficient spread of the progeny virus from cell to cell. May serve as a secondary viral attachment protein for initiating infection, the spike protein being the major one. Seems to be a 'luxury' protein that is not absolutely necessary for virus infection in culture. However, its presence in the virus may alter its pathogenicity. May become a target for both the humoral and the cellular branches of the immune system. The polypeptide is Hemagglutinin-esterase (HE) (Porcine torovirus (strain P10) (PoTV)).